Here is a 283-residue protein sequence, read N- to C-terminus: MEKISAFIITKNEAARIARAINSVKNIVDEVIVVDSESTDDTVAIAEQLGAKVIVKPWLGYVGQKSFAESLCVNDWILNIDADEELSKELQDEIEYIFASHNQDRYLAYQIKLLIMHRNDQKPRMFAPFNKCTRLYNKKFASFANTVNSTTHDSVVFNKDVDFAGKIYLLNEAAYHYSGTSIEQLVTKANFYSSEQAKDLVKQGKKLSNFRLTTEMIWWFFKAFFIRRYFVFGFDGFVDSMIFAFARFLRLAKLRESLLKSKNVIARSEATWQSRKNNKNSTN.

This sequence belongs to the glycosyltransferase 2 family. WaaE/KdtX subfamily.

This is an uncharacterized protein from Rickettsia felis (strain ATCC VR-1525 / URRWXCal2) (Rickettsia azadi).